A 189-amino-acid chain; its full sequence is Glycerol-3-phosphate acyltransferase (189 aa).

4 helical membrane passes run M1 to L21, L77 to F97, M111 to F131, and L151 to V171.

Belongs to the PlsY family. As to quaternary structure, probably interacts with PlsX.

It localises to the cell inner membrane. It carries out the reaction an acyl phosphate + sn-glycerol 3-phosphate = a 1-acyl-sn-glycero-3-phosphate + phosphate. The protein operates within lipid metabolism; phospholipid metabolism. Its function is as follows. Catalyzes the transfer of an acyl group from acyl-phosphate (acyl-PO(4)) to glycerol-3-phosphate (G3P) to form lysophosphatidic acid (LPA). This enzyme utilizes acyl-phosphate as fatty acyl donor, but not acyl-CoA or acyl-ACP. This Pseudomonas putida (strain W619) protein is Glycerol-3-phosphate acyltransferase.